Consider the following 271-residue polypeptide: uncharacterized protein (271 aa).

Residues Met-1–Gly-202 form a disordered region. A compositionally biased stretch (basic and acidic residues) spans Pro-10–Lys-23. Composition is skewed to low complexity over residues Arg-33–Pro-50 and Gly-59–Pro-73. The segment covering Thr-92–Gln-101 has biased composition (polar residues). Over residues Leu-121–Pro-142 the composition is skewed to basic residues.

This is an uncharacterized protein from Homo sapiens (Human).